Reading from the N-terminus, the 164-residue chain is Arginine repressor (164 aa).

It belongs to the ArgR family.

The protein localises to the cytoplasm. It participates in amino-acid biosynthesis; L-arginine biosynthesis [regulation]. Functionally, regulates arginine biosynthesis genes. The polypeptide is Arginine repressor (Mycolicibacterium paratuberculosis (strain ATCC BAA-968 / K-10) (Mycobacterium paratuberculosis)).